We begin with the raw amino-acid sequence, 74 residues long: Protein DELETION OF SUV3 SUPPRESSOR 1(I) (74 aa).

Positions 35-74 are disordered; that stretch reads EKEEVKEVSQQWEDDWDDDDVNDDFSRQLRKELENGTDKK. Over residues 46 to 57 the composition is skewed to acidic residues; sequence WEDDWDDDDVND. Basic and acidic residues predominate over residues 58 to 74; the sequence is DFSRQLRKELENGTDKK.

It belongs to the DSS1/SEM1 family. Part of the 26S proteasome. Interacts with BRCA2A and BRCA2B. Interacts with UCH1 and UCH2. Can form a tripartite complex with both RAD51 and BRCA2B or both DMC1 and BRCA2B.

Its function is as follows. Subunit of the 26S proteasome which plays a role in ubiquitin-dependent proteolysis. The chain is Protein DELETION OF SUV3 SUPPRESSOR 1(I) from Arabidopsis thaliana (Mouse-ear cress).